A 76-amino-acid chain; its full sequence is Rhesus theta defensin-1/2 subunit B (76 aa).

The first 22 residues, 1–22, serve as a signal peptide directing secretion; that stretch reads MRTFALLTAMLLLVALHAQAEA. A propeptide spanning residues 23–64 is cleaved from the precursor; that stretch reads RQARADEAAAQQQPGADDQGMAHSFTRPENAALPLSESARGL. The tract at residues 25 to 54 is disordered; it reads ARADEAAAQQQPGADDQGMAHSFTRPENAA. The segment covering 30 to 44 has biased composition (low complexity); the sequence is AAAQQQPGADDQGMA. Residue Arg65 forms a Cyclopeptide (Arg-Cys) (interchain with C-73 in subunit A); in form RTD-1 linkage. Residue Arg65 forms a Cyclopeptide (Arg-Cys) (interchain with C-73 in subunit B); in form RTD-2 linkage. Cys68 and Cys73 are joined by a disulfide. Cys73 participates in a covalent cross-link: Cyclopeptide (Cys-Arg) (interchain with R-65 in subunit A); in form RTD-1. A Cyclopeptide (Cys-Arg) (interchain with R-65 in subunit B); in form RTD-2 cross-link involves residue Cys73. Positions 74-76 are excised as a propeptide; sequence QLL.

It belongs to the alpha-defensin family. Theta subfamily. RTD-1 is a cyclic heterodimer composed of subunits A and B; disulfide-linked. RTD-2 is a cyclic homodimer composed of two subunits B; disulfide-linked. Forms a cyclic peptide with 1 subunit B (RTD-2) or with 1 subunit A (RTD-1). An additional intersubunit disulfide bond is formed. In terms of tissue distribution, RTD-1 is expressed in bone marrow. Detected in promyelocytes, myelocytes and mature neutrophils and monocytes.

Functionally, RTD-1 and RTD-2 have similar antimicrobial activities against the Gram-positive bacteria S.aureus 502A and L.monocytogenes, the Gram-negative bacterium S.typhimurium, and the fungi C.albicans 16820 and C.neoformans 271A. RTD-2 is 2-3-fold less active than RTD-1 against E.coli ML35. This Macaca mulatta (Rhesus macaque) protein is Rhesus theta defensin-1/2 subunit B (RTD1B).